Reading from the N-terminus, the 60-residue chain is Protein CADMIUM TOLERANCE 4 (60 aa).

A helical transmembrane segment spans residues 26 to 42 (GFLYACLFMLCCCFCCY).

The protein belongs to the CYSTM1 family. In terms of tissue distribution, mainly expressed in shoots, and, to a lower extent, in roots.

It localises to the cell membrane. The protein localises to the secreted. It is found in the cell wall. Confers resistance to heavy metal ions (e.g. aluminium (Al)) by chelating them at the plasma membrane of root cells, thus stopping their entry and reducing their accumulation. In Oryza sativa subsp. japonica (Rice), this protein is Protein CADMIUM TOLERANCE 4.